Consider the following 317-residue polypeptide: Spore protein CgeB (317 aa).

In terms of biological role, may be involved in maturation of the outermost layer of the spore. May act as a glycosyltransferase that contributes to the glycosylation state of the spore. The chain is Spore protein CgeB from Bacillus subtilis (strain 168).